Reading from the N-terminus, the 647-residue chain is Acetyl-coenzyme A synthetase (647 aa).

Residues 190–193, threonine 308, and asparagine 332 contribute to the CoA site; that span reads RGGR. ATP-binding positions include 384-386, 408-413, aspartate 497, and arginine 512; these read GEP and DTWWQT. Serine 520 serves as a coordination point for CoA. Arginine 523 contacts ATP. Residues valine 534, histidine 536, and valine 539 each coordinate Mg(2+). Position 581 (arginine 581) interacts with CoA. N6-acetyllysine is present on lysine 606.

Belongs to the ATP-dependent AMP-binding enzyme family. Mg(2+) is required as a cofactor. Post-translationally, acetylated. Deacetylation by the SIR2-homolog deacetylase activates the enzyme.

It carries out the reaction acetate + ATP + CoA = acetyl-CoA + AMP + diphosphate. Functionally, catalyzes the conversion of acetate into acetyl-CoA (AcCoA), an essential intermediate at the junction of anabolic and catabolic pathways. AcsA undergoes a two-step reaction. In the first half reaction, AcsA combines acetate with ATP to form acetyl-adenylate (AcAMP) intermediate. In the second half reaction, it can then transfer the acetyl group from AcAMP to the sulfhydryl group of CoA, forming the product AcCoA. The sequence is that of Acetyl-coenzyme A synthetase from Parvibaculum lavamentivorans (strain DS-1 / DSM 13023 / NCIMB 13966).